Here is a 204-residue protein sequence, read N- to C-terminus: Phosphopantothenoylcysteine decarboxylase (204 aa).

FMN-binding positions include F59 and 104 to 107; that span reads DANT. Substrate is bound at residue N140. The active-site Proton donor is the C173.

Belongs to the HFCD (homooligomeric flavin containing Cys decarboxylase) superfamily. As to quaternary structure, homotrimer. The cofactor is FMN.

The enzyme catalyses N-[(R)-4-phosphopantothenoyl]-L-cysteine + H(+) = (R)-4'-phosphopantetheine + CO2. It functions in the pathway cofactor biosynthesis; coenzyme A biosynthesis; CoA from (R)-pantothenate: step 3/5. Catalyzes the decarboxylation of the cysteine moiety of 4-phosphopantothenoylcysteine to form 4'-phosphopantotheine and this reaction forms part of the biosynthesis of coenzyme A. The protein is Phosphopantothenoylcysteine decarboxylase (PPCDC) of Homo sapiens (Human).